Reading from the N-terminus, the 309-residue chain is Cytochrome c biogenesis protein CcsA (309 aa).

The next 8 helical transmembrane spans lie at 18 to 38 (LGLL…GAVF), 43 to 63 (SFAV…QLLF), 73 to 93 (ISNL…GQLL), 102 to 122 (IIPS…CFVL), 148 to 168 (VMLS…VLFI), 216 to 236 (SILI…VWAN), 250 to 267 (TWAF…HMRI), and 279 to 299 (LAST…FLGI).

The protein belongs to the CcmF/CycK/Ccl1/NrfE/CcsA family. May interact with ccs1.

The protein resides in the cellular thylakoid membrane. Required during biogenesis of c-type cytochromes (cytochrome c6 and cytochrome f) at the step of heme attachment. The polypeptide is Cytochrome c biogenesis protein CcsA (Prochlorococcus marinus (strain MIT 9301)).